The following is a 302-amino-acid chain: uncharacterized protein (302 aa).

A run of 9 helical transmembrane segments spans residues 3–23 (ILGV…SDWF), 39–59 (FVIG…LTSA), 77–97 (SCIC…PIIV), 106–126 (LVYL…FSWI), 128–148 (GVVL…NGSA), 163–183 (FSLV…ELFV), 199–219 (VIGF…VSLA), 227–247 (GMVL…ALAV), and 254–274 (LPAE…LYLF).

This sequence belongs to the Ca(2+):cation antiporter (CaCA) (TC 2.A.19) family.

The protein resides in the cell membrane. This is an uncharacterized protein from Methanocaldococcus jannaschii (strain ATCC 43067 / DSM 2661 / JAL-1 / JCM 10045 / NBRC 100440) (Methanococcus jannaschii).